A 126-amino-acid chain; its full sequence is Fatty acid-binding protein, liver (126 aa).

The residue at position 2 (alanine 2) is an N-acetylalanine.

It belongs to the calycin superfamily. Fatty-acid binding protein (FABP) family. As to expression, liver.

Its subcellular location is the cytoplasm. Binds free fatty acids and their coenzyme A derivatives, bilirubin, and some other small molecules in the cytoplasm. May be involved in intracellular lipid transport this L-FABP binds only one fatty acid/molecule. Has more affinity for trans-parinaric acid than for cis-parinaric acid. This is Fatty acid-binding protein, liver (fabp1) from Rhamdia sapo (South American catfish).